The chain runs to 532 residues: Invertase 2 (532 aa).

Residues 1-19 form the signal peptide; that stretch reads MLLQAFLFLLAGFAAKISA. Residue Asn-23 is glycosylated (N-linked (GlcNAc...) asparagine). Substrate is bound by residues 39-42 and Gln-60; that span reads WMND. Asp-42 is an active-site residue. N-linked (GlcNAc...) asparagine; partial glycosylation occurs at Asn-64. Asn-97 carries N-linked (GlcNAc...) asparagine glycosylation. Residue 102-103 coordinates substrate; sequence FS. N-linked (GlcNAc...) asparagine glycans are attached at residues Asn-111 and Asn-118. An N-linked (GlcNAc...) asparagine; partial glycan is attached at Asn-165. Substrate is bound by residues 170 to 171 and Glu-223; that span reads RD. 2 N-linked (GlcNAc...) asparagine; partial glycosylation sites follow: Asn-266 and Asn-275. Position 311 (Trp-311) interacts with substrate. N-linked (GlcNAc...) asparagine glycans are attached at residues Asn-356, Asn-369, Asn-384, and Asn-398. Residue Asn-512 is glycosylated (N-linked (GlcNAc...) asparagine; partial).

This sequence belongs to the glycosyl hydrolase 32 family. Isoform Secreted is glycosylated. Isoform Intracellular is not glycosylated.

The protein localises to the cytoplasm. It localises to the secreted. The catalysed reaction is Hydrolysis of terminal non-reducing beta-D-fructofuranoside residues in beta-D-fructofuranosides.. The sequence is that of Invertase 2 (SUC2) from Saccharomyces cerevisiae (strain ATCC 204508 / S288c) (Baker's yeast).